The following is a 716-amino-acid chain: Penicillin-binding protein 2A (716 aa).

Residues Leu-22 to Ile-42 traverse the membrane as a helical segment. Residue Ser-397 is the Acyl-ester intermediate of the active site. Positions Ser-689 to Glu-706 are enriched in basic and acidic residues. The interval Ser-689–Asn-716 is disordered.

It belongs to the transpeptidase family.

It is found in the cell membrane. The protein resides in the forespore inner membrane. The catalysed reaction is Preferential cleavage: (Ac)2-L-Lys-D-Ala-|-D-Ala. Also transpeptidation of peptidyl-alanyl moieties that are N-acyl substituents of D-alanine.. The protein operates within cell wall biogenesis; peptidoglycan biosynthesis. In terms of biological role, involved in the synthesis of peptidoglycan associated with cell wall elongation, especially following spore germination. Has a partially redundant function with PBP 1 (ponA) or PBP 4 (pbpD) during spore outgrowth. Plays a redundant role with PbpH in determining the rod shape of the cell during vegetative growth and spore outgrowth. This Bacillus subtilis (strain 168) protein is Penicillin-binding protein 2A.